A 578-amino-acid chain; its full sequence is Membrane protein insertase YidC (578 aa).

A helical transmembrane segment spans residues 3 to 23; it reads IQRSILIVALAVVSYLLVLQW. Residues 34–71 are disordered; sequence AASASMNTTQGLPDTPSAAGTSSDVPTAQSGAAGSEAA. Residues 37–65 are compositionally biased toward polar residues; that stretch reads ASMNTTQGLPDTPSAAGTSSDVPTAQSGA. Helical transmembrane passes span 361–381, 387–407, 457–477, 500–520, and 535–555; these read LELT…FWLL, LIGN…LAFF, LGGC…YWVL, PFFI…MLNP, and PIIF…YWVV.

The protein belongs to the OXA1/ALB3/YidC family. Type 1 subfamily. In terms of assembly, interacts with the Sec translocase complex via SecD. Specifically interacts with transmembrane segments of nascent integral membrane proteins during membrane integration.

The protein localises to the cell inner membrane. Its function is as follows. Required for the insertion and/or proper folding and/or complex formation of integral membrane proteins into the membrane. Involved in integration of membrane proteins that insert both dependently and independently of the Sec translocase complex, as well as at least some lipoproteins. Aids folding of multispanning membrane proteins. This chain is Membrane protein insertase YidC, found in Pseudomonas paraeruginosa (strain DSM 24068 / PA7) (Pseudomonas aeruginosa (strain PA7)).